The chain runs to 199 residues: HTH-type transcriptional regulator BetI (199 aa).

The region spanning 8–68 (EIRKPQLVKA…ETMREILRQL (61 aa)) is the HTH tetR-type domain. A DNA-binding region (H-T-H motif) is located at residues 31 to 50 (SISLISKEAGVSTGIINHYF).

It functions in the pathway amine and polyamine biosynthesis; betaine biosynthesis via choline pathway [regulation]. Functionally, repressor involved in the biosynthesis of the osmoprotectant glycine betaine. It represses transcription of the choline transporter BetT and the genes of BetAB involved in the synthesis of glycine betaine. The sequence is that of HTH-type transcriptional regulator BetI from Vibrio campbellii (strain ATCC BAA-1116).